Reading from the N-terminus, the 290-residue chain is Glyceraldehyde-3-phosphate dehydrogenase (290 aa).

NAD(+) contacts are provided by aspartate 13 and arginine 58. Residues 129 to 131, threonine 160, 189 to 190, and arginine 212 contribute to the D-glyceraldehyde 3-phosphate site; these read SCT and TG. Cysteine 130 serves as the catalytic Nucleophile.

Belongs to the glyceraldehyde-3-phosphate dehydrogenase family. As to quaternary structure, homotetramer.

It localises to the cytoplasm. The enzyme catalyses D-glyceraldehyde 3-phosphate + phosphate + NAD(+) = (2R)-3-phospho-glyceroyl phosphate + NADH + H(+). It participates in carbohydrate degradation; glycolysis; pyruvate from D-glyceraldehyde 3-phosphate: step 1/5. In Lactarius deterrimus (False saffron milkcap), this protein is Glyceraldehyde-3-phosphate dehydrogenase (GPD).